A 348-amino-acid polypeptide reads, in one-letter code: Centromere protein N-B (348 aa).

It belongs to the CENP-N/CHL4 family.

The protein resides in the nucleus. It is found in the chromosome. The protein localises to the centromere. Probable component of a centromeric complex involved in assembly of kinetochore proteins, mitotic progression and chromosome segregation. The chain is Centromere protein N-B (cenpn-b) from Xenopus laevis (African clawed frog).